A 175-amino-acid chain; its full sequence is MTADDWLPVGKVVAVQGLKGELRVNPASDFPERFTEPGSRWLKARGQAPREIELTSGRQLPGKSVFVVRFAGVESRDAAEALVGQTLMVPADDRPELAEGEFHLLDLVGLEARLSADGDAIGTVKDLISGGNDLLVLERPDGRTLMIPFVEAIVPDVHLEQGWLRLTPPPGLLEL.

The region spanning 99–172 (EGEFHLLDLV…WLRLTPPPGL (74 aa)) is the PRC barrel domain.

It belongs to the RimM family. Binds ribosomal protein uS19.

It is found in the cytoplasm. An accessory protein needed during the final step in the assembly of 30S ribosomal subunit, possibly for assembly of the head region. Essential for efficient processing of 16S rRNA. May be needed both before and after RbfA during the maturation of 16S rRNA. It has affinity for free ribosomal 30S subunits but not for 70S ribosomes. In Synechococcus sp. (strain WH7803), this protein is Ribosome maturation factor RimM.